A 1416-amino-acid chain; its full sequence is DNA-directed RNA polymerase subunit beta' (1416 aa).

Cysteine 71, cysteine 73, cysteine 86, and cysteine 89 together coordinate Zn(2+). Mg(2+) is bound by residues aspartate 461, aspartate 463, and aspartate 465. Cysteine 815, cysteine 892, cysteine 899, and cysteine 902 together coordinate Zn(2+).

Belongs to the RNA polymerase beta' chain family. In terms of assembly, the RNAP catalytic core consists of 2 alpha, 1 beta, 1 beta' and 1 omega subunit. When a sigma factor is associated with the core the holoenzyme is formed, which can initiate transcription. Mg(2+) serves as cofactor. Requires Zn(2+) as cofactor.

It carries out the reaction RNA(n) + a ribonucleoside 5'-triphosphate = RNA(n+1) + diphosphate. Its function is as follows. DNA-dependent RNA polymerase catalyzes the transcription of DNA into RNA using the four ribonucleoside triphosphates as substrates. This Blochmanniella pennsylvanica (strain BPEN) protein is DNA-directed RNA polymerase subunit beta'.